The following is a 319-amino-acid chain: MKRQCMNRVALIGTGFVGASYAFALMNQGIADELVLIDVNKEKAEGDVMDLNHGKVFAPKPMNIWHGDYQDCQDADLVVICAGANQKPGETRLDLVDKNMNIFKTIVDSVMRSGFDGIFLVATNPVDILTYATWKFSGLPKERVIGSGTILDTARFRFLLSEYFQVAPTNVHAYIIGEHGDTELPVWSHAEIGSVPIEQILSQNDRYRKEDLENIFVNVRDAAYQVIEKKGATYYGIAMGLVRITRAILHNENAILTVSAYLDGQYNEQNVYIGVPAIINRNGIREVMELKLNETEQQQFHHSATVLKDILSRYFDDVK.

NAD(+)-binding positions include Val-17, Asp-38, Lys-43, Tyr-69, and 83–84; that span reads GA. The substrate site is built by Gln-86 and Arg-92. NAD(+) is bound by residues Thr-105, 122-124, and Ser-147; that span reads ATN. 124-127 contributes to the substrate binding site; that stretch reads NPVD. 152 to 155 is a binding site for substrate; sequence DTAR. Beta-D-fructose 1,6-bisphosphate is bound by residues Arg-157 and His-172. Catalysis depends on His-179, which acts as the Proton acceptor. At Tyr-224 the chain carries Phosphotyrosine. Residue Thr-233 coordinates substrate.

The protein belongs to the LDH/MDH superfamily. LDH family. In terms of assembly, homotetramer.

The protein localises to the cytoplasm. It carries out the reaction (S)-lactate + NAD(+) = pyruvate + NADH + H(+). It functions in the pathway fermentation; pyruvate fermentation to lactate; (S)-lactate from pyruvate: step 1/1. Allosterically activated by fructose 1,6-bisphosphate (FBP). In terms of biological role, catalyzes the conversion of lactate to pyruvate. This chain is L-lactate dehydrogenase, found in Geobacillus sp. (strain WCH70).